Here is a 419-residue protein sequence, read N- to C-terminus: L-rhamnose isomerase (419 aa).

Positions 262, 294, and 296 each coordinate Mn(2+).

This sequence belongs to the rhamnose isomerase family. In terms of assembly, homotetramer. Mn(2+) is required as a cofactor.

It localises to the cytoplasm. The catalysed reaction is L-rhamnopyranose = L-rhamnulose. The protein operates within carbohydrate degradation; L-rhamnose degradation; glycerone phosphate from L-rhamnose: step 1/3. Catalyzes the interconversion of L-rhamnose and L-rhamnulose. In Escherichia coli O9:H4 (strain HS), this protein is L-rhamnose isomerase.